Consider the following 248-residue polypeptide: UPF0736 protein BCB4264_A1231 (248 aa).

It belongs to the UPF0736 family.

This is UPF0736 protein BCB4264_A1231 from Bacillus cereus (strain B4264).